A 289-amino-acid polypeptide reads, in one-letter code: Acetylglutamate kinase (289 aa).

Residues 65–66, Arg87, and Asn187 contribute to the substrate site; that span reads GG.

Belongs to the acetylglutamate kinase family. ArgB subfamily.

It localises to the cytoplasm. The enzyme catalyses N-acetyl-L-glutamate + ATP = N-acetyl-L-glutamyl 5-phosphate + ADP. Its pathway is amino-acid biosynthesis; L-arginine biosynthesis; N(2)-acetyl-L-ornithine from L-glutamate: step 2/4. Functionally, catalyzes the ATP-dependent phosphorylation of N-acetyl-L-glutamate. The polypeptide is Acetylglutamate kinase (Chromobacterium violaceum (strain ATCC 12472 / DSM 30191 / JCM 1249 / CCUG 213 / NBRC 12614 / NCIMB 9131 / NCTC 9757 / MK)).